Consider the following 533-residue polypeptide: Cytochrome P450 9e2 (533 aa).

Cys-475 is a binding site for heme.

The protein belongs to the cytochrome P450 family. The cofactor is heme.

Its subcellular location is the endoplasmic reticulum membrane. It is found in the microsome membrane. In Blattella germanica (German cockroach), this protein is Cytochrome P450 9e2 (CYP9E2).